The following is a 3135-amino-acid chain: Beauvericin nonribosomal cyclodepsipeptide synthetase BEA1 (3135 aa).

A condensation 1 region spans residues 70–458 (HVAYEISNDI…QRLRGSPDKL (389 aa)). A disordered region spans residues 196 to 228 (LSNRPYTPESSDPEDDGLSLTPTDGSKTPETEG). The interval 499-896 (SLSPSKVAIC…GRMDSQVKIR (398 aa)) is adenylation 1. In terms of domain architecture, Carrier 1 spans 1021–1097 (STTTSSQSKL…GLEAIVNGSA (77 aa)). Position 1058 is an O-(pantetheine 4'-phosphoryl)serine (Ser-1058). The condensation 2 stretch occupies residues 1115–1542 (SYSQGRLWFL…NIPISVLPLT (428 aa)). Positions 1571 to 1974 (FRTQVAAYPD…GRMDTQFKIR (404 aa)) are adenylation 2. The interval 2042 to 2182 (MYADIGDIDP…FPSPEYLAQV (141 aa)) is S-adenosyl-L-methionine-dependent N-methyltransferase. Carrier domains lie at 2509 to 2583 (VPIS…REGL) and 2603 to 2677 (APRT…ESTD). O-(pantetheine 4'-phosphoryl)serine occurs at positions 2543 and 2637. The segment at 2721–3127 (QDMYQSTQMQ…QYFLEEVCNT (407 aa)) is condensation 3.

The protein belongs to the NRP synthetase family.

The catalysed reaction is 3 (R)-2-hydroxy-3-methylbutanoate + 3 L-phenylalanine + 3 S-adenosyl-L-methionine + 6 ATP = beauvericin + 6 AMP + 3 S-adenosyl-L-homocysteine + 6 diphosphate + 6 H(+). Its function is as follows. Beauvericin nonribosomal cyclodepsipeptide synthetase; part of the gene cluster that mediates the biosynthesis of beauvericin (BEA), a non-ribosomal cyclic hexadepsipeptide that shows antibiotic, antifungal, insecticidal, and cancer cell antiproliferative and antihaptotactic activity. Ketoisovalerate reductase BEA2 catalyzes the NADPH-specific reduction of ketoisovaleric acid to hydroxyisovalerate, a precursor for beauvericin biosynthesis. The nonribosomal cyclodepsipeptide synthetase BEA1 then catalyzes the formation of beauvericin via condensation and cyclization of 3 dipeptidol monomers, each composed of one unit of hydroxyisovalerate and one unit of N-methyl-phenylalanine. The sequence is that of Beauvericin nonribosomal cyclodepsipeptide synthetase BEA1 from Gibberella fujikuroi (strain CBS 195.34 / IMI 58289 / NRRL A-6831) (Bakanae and foot rot disease fungus).